We begin with the raw amino-acid sequence, 215 residues long: Cytochrome b6 (215 aa).

A helical transmembrane segment spans residues 32–52; it reads IFYCLGGITLTCFLIQVATGF. Cys-35 provides a ligand contact to heme c. 2 residues coordinate heme b: His-86 and His-100. Transmembrane regions (helical) follow at residues 90–110, 116–136, and 186–206; these read ASMM…TGGF, LTWV…VTGY, and LHTF…FLMI. His-187 and His-202 together coordinate heme b.

Belongs to the cytochrome b family. PetB subfamily. The 4 large subunits of the cytochrome b6-f complex are cytochrome b6, subunit IV (17 kDa polypeptide, PetD), cytochrome f and the Rieske protein, while the 4 small subunits are PetG, PetL, PetM and PetN. The complex functions as a dimer. Heme b serves as cofactor. Requires heme c as cofactor.

The protein localises to the plastid. Its subcellular location is the chloroplast thylakoid membrane. Its function is as follows. Component of the cytochrome b6-f complex, which mediates electron transfer between photosystem II (PSII) and photosystem I (PSI), cyclic electron flow around PSI, and state transitions. The chain is Cytochrome b6 from Spirogyra maxima (Green alga).